Here is a 953-residue protein sequence, read N- to C-terminus: ALS2 C-terminal-like protein (953 aa).

8 MORN repeats span residues 358 to 380 (YEGEWYWGRPHGKGTLKWPDGRN), 381 to 403 (HVGDFCQGLEHGFGIRLVPQASE), 409 to 431 (YKCHWWEGSMCGYGICEYSTSEV), 432 to 454 (YKGYFQEGLRHGFGVLESAPQAP), 459 to 481 (YTGHWERGQRSGYGVEEDSDRGE), 483 to 505 (YIGMWQADQRHGPGVMVTQAGVC), 506 to 528 (YQGTFQADKMVGPGILLSDDDSL), and 529 to 552 (YEGTFTRDLTLVGKGKVTFPNGFT). Positions 796–942 (LFPDARLLEF…IQKEDMRLHR (147 aa)) constitute a VPS9 domain.

Homodimer. Forms a heteromeric complex with ALS2. Interacts with ALS2 and RAB5A.

It localises to the cytoplasm. Acts as a guanine nucleotide exchange factor (GEF) for Rab5 GTPase. Regulates the ALS2-mediated endosome dynamics. This Bos taurus (Bovine) protein is ALS2 C-terminal-like protein (ALS2CL).